Here is a 450-residue protein sequence, read N- to C-terminus: CD209 antigen (450 aa).

The Cytoplasmic segment spans residues 1 to 37; it reads MSDSKEPSVQQLGLLEEEQLRGLGFRQTRGYKSLAGC. 3 short sequence motifs (endocytosis signal) span residues 14 to 15, 16 to 18, and 31 to 34; these read LL, EEE, and YKSL. A helical; Signal-anchor for type II membrane protein transmembrane segment spans residues 38-58; the sequence is LGHGALVLQLLSFTLLAGLLI. The Extracellular portion of the chain corresponds to 59 to 450; the sequence is QVSKFPSSIS…APATPNPPPV (392 aa). N-linked (GlcNAc...) asparagine glycosylation is present at asparagine 80. A run of 9 repeats spans residues 96–118, 119–141, 142–164, 165–187, 188–210, 211–233, 234–256, 257–279, and 280–303. Residues 96-303 are 9 X approximate tandem repeats; sequence KLQEIYQELT…AVERLCRPCP (208 aa). Disulfide bonds link cysteine 302–cysteine 313, cysteine 330–cysteine 423, and cysteine 402–cysteine 415. One can recognise a C-type lectin domain in the interval 309-424; the sequence is FQGNCYFMSN…CNLAKFWICK (116 aa). Ca(2+)-binding residues include glutamate 393, asparagine 395, valine 397, glutamate 400, asparagine 411, and aspartate 412.

In terms of assembly, homotetramer. Interacts with C1QBP; the interaction is indicative for a C1q:C1QBP:CD209 signaling complex. Interacts with ICAM2 and ICAM3 by binding to mannose-like carbohydrates. Interacts (via C-type lectin domain) with CEACAM1 (via Lewis X moieties); this interaction is regulated by the glycosylation pattern of CEACAM1 on cell types and regulates contact between dendritic cells and neutrophils.

The protein localises to the membrane. Pathogen-recognition receptor expressed on the surface of immature dendritic cells (DCs) and involved in initiation of primary immune response. Thought to mediate the endocytosis of pathogens which are subsequently degraded in lysosomal compartments. The receptor returns to the cell membrane surface and the pathogen-derived antigens are presented to resting T-cells via MHC class II proteins to initiate the adaptive immune response. Probably recognizes in a calcium-dependent manner high mannose N-linked oligosaccharides in a variety of pathogen antigens. Functionally, on DCs it is a high affinity receptor for ICAM2 and ICAM3 by binding to mannose-like carbohydrates. May act as a DC rolling receptor that mediates transendothelial migration of DC presursors from blood to tissues by binding endothelial ICAM2. Seems to regulate DC-induced T-cell proliferation by binding to ICAM3 on T-cells in the immunological synapse formed between DC and T-cells. This is CD209 antigen (CD209) from Hylobates lar (Lar gibbon).